Here is a 357-residue protein sequence, read N- to C-terminus: Transactivator protein DR7 (357 aa).

Residues 107-187 form an interaction with host p53 region; sequence LVGKDGAVYV…LLTVGGLCQT (81 aa).

This sequence belongs to the herpesviridae US22 family. As to quaternary structure, interacts with host p53 and inhibits p53-activated transcription.

Functionally, involved in transactivation. Displays transforming activity. In Homo sapiens (Human), this protein is Transactivator protein DR7 (DR7L).